The sequence spans 356 residues: Sorbitol dehydrogenase (356 aa).

Cys-44 lines the Zn(2+) pocket. Tyr-50 contacts substrate. Positions 69 and 70 each coordinate Zn(2+). Glu-155 contributes to the substrate binding site. 3 residues coordinate NAD(+): Ile-183, Asp-203, and Arg-208. Phosphoserine occurs at positions 210 and 224. NAD(+) is bound by residues 272 to 274 and 296 to 298; these read VGL and VFR. Substrate contacts are provided by Arg-298 and Tyr-299.

The protein belongs to the zinc-containing alcohol dehydrogenase family. As to quaternary structure, homotetramer. It depends on Zn(2+) as a cofactor. In terms of tissue distribution, expressed in lens.

It is found in the mitochondrion membrane. The protein localises to the cell projection. Its subcellular location is the cilium. It localises to the flagellum. The catalysed reaction is xylitol + NAD(+) = D-xylulose + NADH + H(+). It catalyses the reaction keto-D-fructose + NADH + H(+) = D-sorbitol + NAD(+). It carries out the reaction L-iditol + NAD(+) = keto-L-sorbose + NADH + H(+). Inhibited in vitro by metal chelators such as EDTA and 1,10-phenanthroline. Functionally, polyol dehydrogenase that catalyzes the reversible NAD(+)-dependent oxidation of various sugar alcohols. Is mostly active with xylitol, D-sorbitol (D-glucitol) and L-iditol as substrates, leading to the C2-oxidized products D-xylulose, D-fructose and L-sorbose, respectively. Is a key enzyme in the polyol pathway that interconverts glucose and fructose via sorbitol, which constitutes an important alternate route for glucose metabolism. May play a role in sperm motility by using sorbitol as an alternative energy source for sperm motility. Cannot use NADP(+) as the electron acceptor. Has no activity on ethanol, methanol, glycerol, galactitol and fructose 6-phosphate. The polypeptide is Sorbitol dehydrogenase (SORD) (Bos taurus (Bovine)).